Reading from the N-terminus, the 501-residue chain is Mitogen-activated protein kinase MKC1 (501 aa).

A Protein kinase domain is found at 28–339; it reads FKIVKELGHG…VRDALNHKYL (312 aa). ATP contacts are provided by residues 34-42 and Lys-74; that span reads LGHGAYGIV. Asp-174 serves as the catalytic Proton acceptor. Thr-211 bears the Phosphothreonine mark. Positions 211–213 match the TXY motif; that stretch reads TEY. Tyr-213 is subject to Phosphotyrosine. Residues 400 to 450 form a disordered region; sequence MQKREEQRQEEEEKELLEQQRQFPAQESMDISQTPYNNLETNIGTPQVEDD. Polar residues predominate over residues 422–444; that stretch reads FPAQESMDISQTPYNNLETNIGT.

It belongs to the protein kinase superfamily. CMGC Ser/Thr protein kinase family. MAP kinase subfamily. Mg(2+) is required as a cofactor. Post-translationally, dually phosphorylated on Thr-211 and Tyr-213, which activates the enzyme.

The enzyme catalyses L-seryl-[protein] + ATP = O-phospho-L-seryl-[protein] + ADP + H(+). It catalyses the reaction L-threonyl-[protein] + ATP = O-phospho-L-threonyl-[protein] + ADP + H(+). With respect to regulation, activated by tyrosine and threonine phosphorylation. The polypeptide is Mitogen-activated protein kinase MKC1 (MKC1) (Candida albicans (Yeast)).